We begin with the raw amino-acid sequence, 604 residues long: uncharacterized protein (604 aa).

Residues 49-332 (LILVMLMVVI…LANQFNTMLS (284 aa)) form the ABC transmembrane type-1 domain. The next 4 helical transmembrane spans lie at 50–70 (ILVM…PFVI), 86–106 (LIPV…SLWF), 172–192 (VITF…LTLI), and 288–308 (IAAI…SIVV). Residues 366–600 (IEFRDVSFGY…KGFYSDLYES (235 aa)) enclose the ABC transporter domain. Residue 399-406 (GPTGAGKT) coordinates ATP. Residues 510–530 (LISIARAVLADPVLLILDEAT) form a helical membrane-spanning segment.

It belongs to the ABC transporter superfamily.

Its subcellular location is the cell membrane. This is an uncharacterized protein from Bacillus subtilis (strain 168).